We begin with the raw amino-acid sequence, 796 residues long: Nuclear GTPase SLIP-GC (796 aa).

Positions 1 to 22 are enriched in basic and acidic residues; that stretch reads MAETKDVFGQEPHPVEDDLYKE. Residues 1 to 35 form a disordered region; the sequence is MAETKDVFGQEPHPVEDDLYKERTRKRRKSDRDQR. 107 to 114 is a binding site for GTP; the sequence is GSTGAGKS. Coiled coils occupy residues 158 to 185 and 745 to 775; these read SDQEWREELKNLTKLLHRTEELSREEAD and KELADVGSEYKEMEKLHRSLREVAENARLRK.

Expressed in germinal center B-cell and in lymphomas derived from germinal center B-cell.

It localises to the nucleus speckle. Nuclear GTPase found in germinal center B-cells, where it may inhibit function of the activation-induced cytidine deaminase AICDA. Reduces somatic hypermutation in B-cells which may enhance genome stability. This chain is Nuclear GTPase SLIP-GC (NUGGC), found in Homo sapiens (Human).